The sequence spans 83 residues: Apolipoprotein C-I, basic form (83 aa).

Positions 1–26 are cleaved as a signal peptide; that stretch reads MRLFLSLPVLVVVLSMVLEGPAPAQG.

It belongs to the apolipoprotein C1 family.

The protein resides in the secreted. In terms of biological role, inhibitor of lipoprotein binding to the low density lipoprotein (LDL) receptor, LDL receptor-related protein, and very low density lipoprotein (VLDL) receptor. Associates with high density lipoproteins (HDL) and the triacylglycerol-rich lipoproteins in the plasma and makes up about 10% of the protein of the VLDL and 2% of that of HDL. Appears to interfere directly with fatty acid uptake and is also the major plasma inhibitor of cholesteryl ester transfer protein (CETP). Binds free fatty acids and reduces their intracellular esterification. Modulates the interaction of APOE with beta-migrating VLDL and inhibits binding of beta-VLDL to the LDL receptor-related protein. In Colobus guereza (Mantled guereza), this protein is Apolipoprotein C-I, basic form (APOC1B).